The sequence spans 194 residues: Prostaglandin-H2 D-isomerase (194 aa).

An N-terminal signal peptide occupies residues 1–24; the sequence is MAASHTLWMGLVLLGVLGVLQTRA. Glutamine 25 is subject to Pyrrolidone carboxylic acid. N-linked (GlcNAc...) asparagine glycosylation is present at asparagine 51. Cysteine 65 acts as the Nucleophile in catalysis. Asparagine 78 carries N-linked (GlcNAc...) asparagine glycosylation. Residues cysteine 89 and cysteine 189 are joined by a disulfide bond.

This sequence belongs to the calycin superfamily. Lipocalin family. In terms of assembly, monomer. As to expression, in the male reproductive system, it is expressed in the testis and epididymis, and is secreted into the seminal fluid.

It localises to the rough endoplasmic reticulum. The protein localises to the nucleus membrane. Its subcellular location is the golgi apparatus. The protein resides in the cytoplasm. It is found in the perinuclear region. It localises to the secreted. It catalyses the reaction prostaglandin H2 = prostaglandin D2. Catalyzes the conversion of PGH2 to PGD2, a prostaglandin involved in smooth muscle contraction/relaxation and a potent inhibitor of platelet aggregation. Involved in a variety of CNS functions, such as sedation, NREM sleep and PGE2-induced allodynia, and may have an anti-apoptotic role in oligodendrocytes. Binds small non-substrate lipophilic molecules, including biliverdin, bilirubin, retinal, retinoic acid and thyroid hormone, and may act as a scavenger for harmful hydrophobic molecules and as a secretory retinoid and thyroid hormone transporter. Possibly involved in development and maintenance of the blood-brain, blood-retina, blood-aqueous humor and blood-testis barrier. It is likely to play important roles in both maturation and maintenance of the central nervous system and male reproductive system. Involved in PLA2G3-dependent maturation of mast cells. PLA2G3 is secreted by immature mast cells and acts on nearby fibroblasts upstream to PTDGS to synthesize PGD2, which in turn promotes mast cell maturation and degranulation via PTGDR. This Equus caballus (Horse) protein is Prostaglandin-H2 D-isomerase (PTGDS).